We begin with the raw amino-acid sequence, 492 residues long: ATP synthase subunit beta, chloroplastic (492 aa).

Gly-170–Thr-177 is an ATP binding site.

This sequence belongs to the ATPase alpha/beta chains family. As to quaternary structure, F-type ATPases have 2 components, CF(1) - the catalytic core - and CF(0) - the membrane proton channel. CF(1) has five subunits: alpha(3), beta(3), gamma(1), delta(1), epsilon(1). CF(0) has four main subunits: a(1), b(1), b'(1) and c(9-12).

The protein localises to the plastid. Its subcellular location is the chloroplast thylakoid membrane. The enzyme catalyses ATP + H2O + 4 H(+)(in) = ADP + phosphate + 5 H(+)(out). Functionally, produces ATP from ADP in the presence of a proton gradient across the membrane. The catalytic sites are hosted primarily by the beta subunits. The chain is ATP synthase subunit beta, chloroplastic from Angiopteris lygodiifolia (Turnip fern).